Reading from the N-terminus, the 358-residue chain is Zinc-type alcohol dehydrogenase-like protein YogA (358 aa).

This sequence belongs to the zinc-containing alcohol dehydrogenase family. Quinone oxidoreductase subfamily.

It functions in the pathway secondary metabolite biosynthesis. In terms of biological role, zinc-type alcohol dehydrogenase-like protein; part of the gene cluster that mediates the biosynthesis of phomenoic acid, a long chain aliphatic carboxylic acid that does not appear to be essential for pathogenicity but may play a role in allowing to outcompete other fungi in the environmental niche via its antifungal properties. The polyketide synthase produces the long methylated aliphatic carboxylic acid chain of phomenoic acid. The cluster-specific cytochrome P450 monooxygenase may then hydroxylate the methyl group of carbon 31. The putative dehydrogenase YogA, which has no obvious role in phomenoic acid biosynthesis, may further modify phomenoic acid to produce a compound not identified yet. This Leptosphaeria maculans (strain JN3 / isolate v23.1.3 / race Av1-4-5-6-7-8) (Blackleg fungus) protein is Zinc-type alcohol dehydrogenase-like protein YogA.